We begin with the raw amino-acid sequence, 97 residues long: Exodeoxyribonuclease 7 small subunit (97 aa).

Residues 1 to 22 form a disordered region; it reads MAKTASPGATPPDNGTEPLPDN.

The protein belongs to the XseB family. Heterooligomer composed of large and small subunits.

The protein resides in the cytoplasm. It carries out the reaction Exonucleolytic cleavage in either 5'- to 3'- or 3'- to 5'-direction to yield nucleoside 5'-phosphates.. Bidirectionally degrades single-stranded DNA into large acid-insoluble oligonucleotides, which are then degraded further into small acid-soluble oligonucleotides. The sequence is that of Exodeoxyribonuclease 7 small subunit from Burkholderia ambifaria (strain MC40-6).